The sequence spans 247 residues: GTP cyclohydrolase 1 type 2 homolog (247 aa).

Residues histidine 63, histidine 64, aspartate 101, histidine 215, and glutamate 219 each contribute to the a divalent metal cation site.

This sequence belongs to the GTP cyclohydrolase I type 2/NIF3 family. In terms of assembly, homohexamer.

In Buchnera aphidicola subsp. Schizaphis graminum (strain Sg), this protein is GTP cyclohydrolase 1 type 2 homolog.